The chain runs to 305 residues: ATP synthase gamma chain (305 aa).

The protein belongs to the ATPase gamma chain family. F-type ATPases have 2 components, CF(1) - the catalytic core - and CF(0) - the membrane proton channel. CF(1) has five subunits: alpha(3), beta(3), gamma(1), delta(1), epsilon(1). CF(0) has three main subunits: a, b and c.

It localises to the cell membrane. Produces ATP from ADP in the presence of a proton gradient across the membrane. The gamma chain is believed to be important in regulating ATPase activity and the flow of protons through the CF(0) complex. This is ATP synthase gamma chain from Streptomyces avermitilis (strain ATCC 31267 / DSM 46492 / JCM 5070 / NBRC 14893 / NCIMB 12804 / NRRL 8165 / MA-4680).